A 298-amino-acid polypeptide reads, in one-letter code: 4-hydroxy-3-methylbut-2-enyl diphosphate reductase (298 aa).

Cysteine 12 lines the [4Fe-4S] cluster pocket. Histidine 40 and histidine 78 together coordinate (2E)-4-hydroxy-3-methylbut-2-enyl diphosphate. Residues histidine 40 and histidine 78 each contribute to the dimethylallyl diphosphate site. Residues histidine 40 and histidine 78 each contribute to the isopentenyl diphosphate site. [4Fe-4S] cluster is bound at residue cysteine 100. Position 128 (histidine 128) interacts with (2E)-4-hydroxy-3-methylbut-2-enyl diphosphate. Residue histidine 128 participates in dimethylallyl diphosphate binding. Histidine 128 serves as a coordination point for isopentenyl diphosphate. Catalysis depends on glutamate 130, which acts as the Proton donor. Threonine 171 is a (2E)-4-hydroxy-3-methylbut-2-enyl diphosphate binding site. A [4Fe-4S] cluster-binding site is contributed by cysteine 200. 4 residues coordinate (2E)-4-hydroxy-3-methylbut-2-enyl diphosphate: serine 228, serine 229, asparagine 230, and serine 270. Dimethylallyl diphosphate contacts are provided by serine 228, serine 229, asparagine 230, and serine 270. Positions 228, 229, 230, and 270 each coordinate isopentenyl diphosphate.

This sequence belongs to the IspH family. [4Fe-4S] cluster is required as a cofactor.

The catalysed reaction is isopentenyl diphosphate + 2 oxidized [2Fe-2S]-[ferredoxin] + H2O = (2E)-4-hydroxy-3-methylbut-2-enyl diphosphate + 2 reduced [2Fe-2S]-[ferredoxin] + 2 H(+). The enzyme catalyses dimethylallyl diphosphate + 2 oxidized [2Fe-2S]-[ferredoxin] + H2O = (2E)-4-hydroxy-3-methylbut-2-enyl diphosphate + 2 reduced [2Fe-2S]-[ferredoxin] + 2 H(+). It participates in isoprenoid biosynthesis; dimethylallyl diphosphate biosynthesis; dimethylallyl diphosphate from (2E)-4-hydroxy-3-methylbutenyl diphosphate: step 1/1. It functions in the pathway isoprenoid biosynthesis; isopentenyl diphosphate biosynthesis via DXP pathway; isopentenyl diphosphate from 1-deoxy-D-xylulose 5-phosphate: step 6/6. Its function is as follows. Catalyzes the conversion of 1-hydroxy-2-methyl-2-(E)-butenyl 4-diphosphate (HMBPP) into a mixture of isopentenyl diphosphate (IPP) and dimethylallyl diphosphate (DMAPP). Acts in the terminal step of the DOXP/MEP pathway for isoprenoid precursor biosynthesis. In Kosmotoga olearia (strain ATCC BAA-1733 / DSM 21960 / TBF 19.5.1), this protein is 4-hydroxy-3-methylbut-2-enyl diphosphate reductase.